We begin with the raw amino-acid sequence, 204 residues long: CLAVATA3/ESR (CLE)-related protein 1 (204 aa).

An N-terminal signal peptide occupies residues 1–21; sequence MAKNAMLCLLILSVVLALAFA. The segment at 21-83 is required for secretion from the host cytoplasm to the host apoplasm; it reads ATNEKDDKEA…SNQLQNAYRM (63 aa). N-linked (GlcNAc...) asparagine glycosylation is present at N32. Residues 116-204 form a disordered region; the sequence is RNTGMKPQSY…TPGVPDRQHR (89 aa). Composition is skewed to basic and acidic residues over residues 139–151, 160–172, and 181–193; these read LHNR…EQKR. Propeptides (removed in mature form) lie at residues 142–150, 163–171, and 184–192; these read REKILEEQK and REKTLEEQK.

The protein belongs to the CLV3/ESR signal peptide family. Preprocessing of the precursor by host proteases leads first to the production of 21-mer CLE-containing peptides (Arg-130 to Lys-150, Arg-151 to Lys-171 and Arg-172 to Lys-192) followed by an ultimate C-term trimming to give the mature 12-mer CLE1-1 peptide. In terms of tissue distribution, highly expressed exclusively within the dorsal esophageal gland cell during syncytium formation in host plants.

It is found in the secreted. The protein localises to the host cytoplasm. The protein resides in the host extracellular space. It localises to the extracellular space. Its subcellular location is the apoplast. Its function is as follows. Mimics host plant CLE extracellular signal peptides that regulate cell fate. May play a role in the differentiation or division of feeding cells (syncytia) induced in plant roots during infection. This chain is CLAVATA3/ESR (CLE)-related protein 1, found in Globodera rostochiensis (Golden nematode worm).